Reading from the N-terminus, the 470-residue chain is Calcium/manganese antiporter SLC30A10 (470 aa).

Residues 1-10 (MGRYSGKTCR) are Cytoplasmic-facing. A helical membrane pass occupies residues 11 to 31 (LLFMLVLTAAFFVAELVSGYL). Residues 32 to 34 (GNS) lie on the Extracellular side of the membrane. A helical transmembrane segment spans residues 35–55 (IALLSDSFNMLSDLISLCVGL). At 56–81 (GSGYIARRGPRGSSATYGYVRAEVVG) the chain is on the cytoplasmic side. The helical transmembrane segment at 82-102 (ALSNAVFLTALCFTIFVEAVL) threads the bilayer. Residues 103-113 (RLARPERIDDP) lie on the Extracellular side of the membrane. Residues 114 to 134 (ELVLIVGALGLAVNVVGLLIF) traverse the membrane as a helical segment. The Cytoplasmic segment spans residues 135–233 (QDCGACFSRC…KSEALNIRGV (99 aa)). The interval 146–223 (RGRRTRPSQQ…EPEETTKKEK (78 aa)) is disordered. Residues 171–184 (AATATAPGSGTAVT) are compositionally biased toward low complexity. The helical transmembrane segment at 234–254 (LLHVMGDALGSVVVVITAIIF) threads the bilayer. Topologically, residues 255–270 (YVQPLRREDPCNWQCY) are extracellular. A helical membrane pass occupies residues 271–291 (IDPSLTVVMVIIILSSAFPLI). Residues 292–470 (KETAVILLQM…RQHYENSTHF (179 aa)) are Cytoplasmic-facing. Residues 300–470 (QMVPKGVNME…RQHYENSTHF (171 aa)) are required for plasma membrane localization. The segment at 451–470 (QGQTLSKTQERQHYENSTHF) is disordered. Over residues 458 to 470 (TQERQHYENSTHF) the composition is skewed to basic and acidic residues.

Belongs to the cation diffusion facilitator (CDF) transporter (TC 2.A.4) family. SLC30A subfamily. In terms of assembly, forms homodimers. Forms heterodimers and high-molecular weight oligomers with SLC30A3, SLC30A2 and SLC30A4; heterodimerization is mediated by covalent-bound tyrosine residues, occurs probably in a tissue-specific manner and could mediate the intracellular zinc transport activity into early endosomes and recycling endosomes. In terms of tissue distribution, specifically expressed in fetal liver and fetal brain.

It localises to the cell membrane. The protein localises to the golgi apparatus membrane. Its subcellular location is the recycling endosome membrane. The protein resides in the early endosome membrane. It catalyses the reaction Mn(2+)(out) + Ca(2+)(in) = Mn(2+)(in) + Ca(2+)(out). The enzyme catalyses Zn(2+)(in) = Zn(2+)(out). Its function is as follows. Calcium:manganese antiporter of the plasma membrane mediating the efflux of intracellular manganese coupled to an active extracellular calcium exchange. Required for intracellular manganese homeostasis, an essential cation for the function of several enzymes, including some crucially important for the metabolism of neurotransmitters and other neuronal metabolic pathways. Manganese can also be cytotoxic and induce oxidative stress, mitochondrial dysfunction and apoptosis. Could also have an intracellular zinc ion transporter activity, directly regulating intracellular zinc ion homeostasis and more indirectly various signaling pathway and biological processes. This Mus musculus (Mouse) protein is Calcium/manganese antiporter SLC30A10.